A 101-amino-acid chain; its full sequence is Large ribosomal subunit protein eL36 (101 aa).

Disordered stretches follow at residues 1-31 (MGEI…GFLS) and 75-101 (GTHM…SKGE).

The protein belongs to the eukaryotic ribosomal protein eL36 family.

This Ulva compressa (Green alga) protein is Large ribosomal subunit protein eL36 (RL36).